The following is a 171-amino-acid chain: ATP synthase subunit delta (171 aa).

This sequence belongs to the ATPase delta chain family. F-type ATPases have 2 components, F(1) - the catalytic core - and F(0) - the membrane proton channel. F(1) has five subunits: alpha(3), beta(3), gamma(1), delta(1), epsilon(1). F(0) has three main subunits: a(1), b(2) and c(10-14). The alpha and beta chains form an alternating ring which encloses part of the gamma chain. F(1) is attached to F(0) by a central stalk formed by the gamma and epsilon chains, while a peripheral stalk is formed by the delta and b chains.

It is found in the cell membrane. In terms of biological role, f(1)F(0) ATP synthase produces ATP from ADP in the presence of a proton or sodium gradient. F-type ATPases consist of two structural domains, F(1) containing the extramembraneous catalytic core and F(0) containing the membrane proton channel, linked together by a central stalk and a peripheral stalk. During catalysis, ATP synthesis in the catalytic domain of F(1) is coupled via a rotary mechanism of the central stalk subunits to proton translocation. Functionally, this protein is part of the stalk that links CF(0) to CF(1). It either transmits conformational changes from CF(0) to CF(1) or is implicated in proton conduction. In Acholeplasma laidlawii (strain PG-8A), this protein is ATP synthase subunit delta.